The primary structure comprises 1133 residues: Sterol regulatory element-binding protein 2 (1133 aa).

The segment at 1–50 (MDENSELGGLETMETLTELGDELTLGDIDEMLQFVSNQVGEFSDLFSEQL) is transcriptional activation (acidic). The Cytoplasmic segment spans residues 1–473 (MDENSELGGL…VALGMVDRSR (473 aa)). Positions 56–65 (GGGGGSGSGG) are enriched in gly residues. The tract at residues 56 to 136 (GGGGGSGSGG…PQPQPQPPAQ (81 aa)) is disordered. The segment covering 92-109 (PLSTFSPSSTSPQAPALQ) has biased composition (low complexity). Over residues 114 to 134 (PTPPRATPVLQPRPQPQPQPP) the composition is skewed to pro residues. The segment at 229–483 (QQVPVLVQPQ…ILLCVLTFLG (255 aa)) is interaction with LMNA. The region spanning 322-372 (ERRTTHNIIEKRYRSSINDKIIELKDLVMGTDAKMHKSGVLRKAIDYIKYL) is the bHLH domain. Positions 372–393 (LQQVNHKLRQENMVLKLANQKN) are leucine-zipper. K456 is covalently cross-linked (Glycyl lysine isopeptide (Lys-Gly) (interchain with G-Cter in SUMO2)). A helical membrane pass occupies residues 474–494 (ILLCVLTFLGLSFNPLTSLLQ). Residues 495–525 (WGGAHNPDQHPYSGSGRNVLSLESGSGGWFD) are Lumenal-facing. Residues 526–546 (WMMPTLLLWLLNGVIVLSVFV) traverse the membrane as a helical segment. At 547–1133 (KLLVHGEPVI…LGGGTAIAAS (587 aa)) the chain is on the cytoplasmic side. The residue at position 1090 (S1090) is a Phosphoserine.

It belongs to the SREBP family. As to quaternary structure, homodimer; efficient DNA binding of the soluble transcription factor fragment requires dimerization with another bHLH protein. Interacts with LMNA. In terms of assembly, forms a tight complex with SCAP, the SCAP-SREBP complex, in the endoplasmic reticulum membrane and the Golgi apparatus. Interacts with PAQR3; the interaction anchors the SCAP-SREBP complex to the Golgi apparatus in low cholesterol conditions. Interacts (via C-terminal domain) with RNF139. Processed in the Golgi apparatus, releasing the protein from the membrane. At low cholesterol the SCAP-SREBP complex is recruited into COPII vesicles for export from the endoplasmic reticulum. In the Golgi, complex SREBPs are cleaved sequentially by site-1 (MBTPS1, S1P) and site-2 (MBTPS2, S2P) proteases. The first cleavage by site-1 protease occurs within the luminal loop, the second cleavage by site-2 protease occurs within the first transmembrane domain, releasing the transcription factor from the Golgi membrane. Apoptosis triggers cleavage by the cysteine proteases caspase-3 and caspase-7. Cleavage and activation is induced by mediated cholesterol efflux. Post-translationally, phosphorylated by AMPK, leading to suppress protein processing and nuclear translocation, and repress target gene expression. In terms of processing, SCAP-free SREBF2 is ubiquitinated by the BCR(ARMC5) complex, leading to its degradation. Ubiquitinated; the nuclear form has a rapid turnover and is rapidly ubiquitinated and degraded by the proteasome in the nucleus.

The protein localises to the endoplasmic reticulum membrane. It localises to the golgi apparatus membrane. Its subcellular location is the cytoplasmic vesicle. It is found in the COPII-coated vesicle membrane. The protein resides in the nucleus. With respect to regulation, activation by cleavage is down-regulated upon activation of SIRT3-dependent PRKAA1/AMPK-alpha signaling cascade which leads to inhibition of ATP-consuming lipogenesis to restore cellular energy balance. Precursor of the transcription factor form (Processed sterol regulatory element-binding protein 2), which is embedded in the endoplasmic reticulum membrane. Low sterol concentrations promote processing of this form, releasing the transcription factor form that translocates into the nucleus and activates transcription of genes involved in cholesterol biosynthesis. In terms of biological role, key transcription factor that regulates expression of genes involved in cholesterol biosynthesis. Binds to the sterol regulatory element 1 (SRE-1) (5'-ATCACCCCAC-3'). Has dual sequence specificity binding to both an E-box motif (5'-ATCACGTGA-3') and to SRE-1 (5'-ATCACCCCAC-3'). Regulates transcription of genes related to cholesterol synthesis pathway. Regulates hepatic lipogenesis. In Rattus norvegicus (Rat), this protein is Sterol regulatory element-binding protein 2.